Reading from the N-terminus, the 464-residue chain is Cytoplasmic tRNA 2-thiolation protein 2 (464 aa).

This sequence belongs to the CTU2/NCS2 family.

The protein localises to the cytoplasm. It participates in tRNA modification; 5-methoxycarbonylmethyl-2-thiouridine-tRNA biosynthesis. In terms of biological role, plays a central role in 2-thiolation of mcm(5)S(2)U at tRNA wobble positions of tRNA(Lys), tRNA(Glu) and tRNA(Gln). May act by forming a heterodimer with NCS6/CTU1 that ligates sulfur from thiocarboxylated URM1 onto the uridine of tRNAs at wobble position. This is Cytoplasmic tRNA 2-thiolation protein 2 from Oryza sativa subsp. indica (Rice).